Consider the following 31-residue polypeptide: Cyclotide vinc-B (31 aa).

Positions 1–31 form a cross-link, cyclopeptide (Gly-Asn); the sequence is GSIPACGESCFKGKCYTPGCTCSKYPLCAKN. Cystine bridges form between Cys6–Cys20, Cys10–Cys22, and Cys15–Cys28.

It belongs to the cyclotide family. This is a cyclic peptide.

In terms of biological role, probably participates in a plant defense mechanism. This is Cyclotide vinc-B from Viola inconspicua.